A 175-amino-acid polypeptide reads, in one-letter code: Cytochrome c homolog (175 aa).

Residues 1 to 8 (MTGKELNK) lie on the Cytoplasmic side of the membrane. The helical; Signal-anchor transmembrane segment at 9-29 (IVAAILFASLIAMIVRFVANI) threads the bilayer. Residues 30-175 (LYKPNLQVLN…LFLKNYVHDK (146 aa)) lie on the Periplasmic side of the membrane. 4 residues coordinate heme c: Cys-84, Cys-87, His-88, and Met-150.

Belongs to the cytochrome c family. Post-translationally, binds 1 heme c group covalently per subunit.

It is found in the cell membrane. May be involved in electron transfer from bc1 complex to aa3. This chain is Cytochrome c homolog (cycM), found in Rickettsia typhi (strain ATCC VR-144 / Wilmington).